Consider the following 202-residue polypeptide: MCNCGSSGEKPTFNDRKSTSYEHLFKYIMVGDSAVGKSNLLLQFVDKRFAPNSDFTIGVEFGSRSININDKQIKLQIWDTAGQEKFRSITRAYYRGAVCAMIVYDITRRDSFESLNSWLTDCRKFSSCDVTTVLIGNKADLEANRQVSTSEAKEFAEKNGLMFFETSAKTALNVDEAFEKSTEQILKKLESNPGLLSNEGNN.

Residue 31 to 38 (GDSAVGKS) participates in GTP binding. Positions 53-61 (SDFTIGVEF) match the Effector region motif. GTP contacts are provided by residues 79 to 83 (DTAGQ) and 137 to 140 (NKAD).

The protein belongs to the small GTPase superfamily. Rab family. In terms of processing, this sequence lacks the C-terminal cysteine motifs subject to isoprenylation in other Rab proteins.

The chain is Ras-related protein Rab-2B (rab2B) from Dictyostelium discoideum (Social amoeba).